The following is a 138-amino-acid chain: Small ribosomal subunit protein uS9c (138 aa).

It belongs to the universal ribosomal protein uS9 family.

It localises to the plastid. The protein localises to the chloroplast. The polypeptide is Small ribosomal subunit protein uS9c (rps9) (Phaeodactylum tricornutum (strain CCAP 1055/1)).